A 487-amino-acid polypeptide reads, in one-letter code: Serine/threonine-protein kinase BSK7 (487 aa).

The N-myristoyl glycine moiety is linked to residue G2. Residues 59–325 (ENIVSEHGEK…DLETPSHQLM (267 aa)) enclose the Protein kinase domain. Residues 65 to 73 (HGEKAPNVV) and K87 each bind ATP. Catalysis depends on D181, which acts as the Proton acceptor.

It belongs to the protein kinase superfamily. Ser/Thr protein kinase family.

The protein localises to the cell membrane. It catalyses the reaction L-seryl-[protein] + ATP = O-phospho-L-seryl-[protein] + ADP + H(+). It carries out the reaction L-threonyl-[protein] + ATP = O-phospho-L-threonyl-[protein] + ADP + H(+). Functionally, probable serine/threonine kinase that acts as a positive regulator of brassinosteroid (BR) signaling downstream of the receptor kinase BRI1. Functions redundantly with BSK3, BSK5, BSK6 and BSK8. The protein is Serine/threonine-protein kinase BSK7 of Arabidopsis thaliana (Mouse-ear cress).